A 323-amino-acid polypeptide reads, in one-letter code: Cyclin-H (323 aa).

Ser-5 carries the phosphoserine; by CDK8 modification. Ser-132 is subject to Phosphoserine. Residues 299–323 form a disordered region; it reads DDDYVPKKSKHEEEEWTDDDLVESL. Basic and acidic residues predominate over residues 302–311; sequence YVPKKSKHEE. The span at 312-323 shows a compositional bias: acidic residues; sequence EEWTDDDLVESL. The residue at position 315 (Thr-315) is a Phosphothreonine. A Phosphoserine modification is found at Ser-322.

This sequence belongs to the cyclin family. Cyclin C subfamily. As to quaternary structure, associates primarily with CDK7 and MAT1 to form the CAK complex. CAK can further associate with the core-TFIIH to form the TFIIH basal transcription factor.

The protein resides in the nucleus. Functionally, regulates CDK7, the catalytic subunit of the CDK-activating kinase (CAK) enzymatic complex. CAK activates the cyclin-associated kinases CDK1, CDK2, CDK4 and CDK6 by threonine phosphorylation. CAK complexed to the core-TFIIH basal transcription factor activates RNA polymerase II by serine phosphorylation of the repetitive C-terminal domain (CTD) of its large subunit (POLR2A), allowing its escape from the promoter and elongation of the transcripts. Involved in cell cycle control and in RNA transcription by RNA polymerase II. Its expression and activity are constant throughout the cell cycle. The protein is Cyclin-H (CCNH) of Macaca fascicularis (Crab-eating macaque).